The primary structure comprises 177 residues: Immunity protein CdiI-YPIII (177 aa).

As to quaternary structure, interacts with the C-terminal DNase fragment (residues 954-1077) of cognate toxin CdiA-YPIII.

Its function is as follows. Immunity protein component of a toxin-immunity protein module, which functions as a cellular contact-dependent growth inhibition (CDI) system. CDI modules allow bacteria to communicate with and inhibit the growth of closely related neighboring bacteria in a contact-dependent fashion. Neutralizes the toxic activity of cognate toxin CdiA-YPIII (residues 954-1077). Does not inhibit toxic activity of CdiA from other toxin-immunity modules. In Yersinia pseudotuberculosis serotype O:3 (strain YPIII), this protein is Immunity protein CdiI-YPIII.